Consider the following 243-residue polypeptide: Carboxy-S-adenosyl-L-methionine synthase (243 aa).

Residues Y39, 64–66 (GCS), N132, and R199 contribute to the S-adenosyl-L-methionine site.

This sequence belongs to the class I-like SAM-binding methyltransferase superfamily. Cx-SAM synthase family. Homodimer.

The enzyme catalyses prephenate + S-adenosyl-L-methionine = carboxy-S-adenosyl-L-methionine + 3-phenylpyruvate + H2O. Catalyzes the conversion of S-adenosyl-L-methionine (SAM) to carboxy-S-adenosyl-L-methionine (Cx-SAM). This is Carboxy-S-adenosyl-L-methionine synthase from Alteromonas mediterranea (strain DSM 17117 / CIP 110805 / LMG 28347 / Deep ecotype).